Here is a 583-residue protein sequence, read N- to C-terminus: Kelch-like protein 35 (583 aa).

Residues 41–119 (TDVVLRAGGR…VYGAGVRLRA (79 aa)) form the BTB domain. A BACK domain is found at 146-248 (LEGRLRAANS…LEHVRLPLLA (103 aa)). 6 Kelch repeats span residues 301–350 (VIVV…ALRN), 352–394 (VYVS…VVQG), 395–441 (QLFA…SCAG), 443–489 (LFVI…SLED), 490–531 (TIYV…VCDG), and 533–579 (VHIL…TIIQ).

The sequence is that of Kelch-like protein 35 (KLHL35) from Homo sapiens (Human).